The following is a 784-amino-acid chain: Toll-like receptor 2 (784 aa).

The signal sequence occupies residues 1–20 (MPHTLWMVWVLGVIISLSKE). Over 21-588 (ESSNQASLSC…RLSVSECHRT (568 aa)) the chain is Extracellular. Residues Cys30 and Cys36 are joined by a disulfide bond. LRR repeat units lie at residues 54-77 (VKSLDLSNNRITYISNSDLQRCVN), 78-101 (LQALVLTSNGINTIEEDSFSSLGS), 102-125 (LEHLDLSYNYLSNLSSSWFKPLSS), 126-150 (LTFLNLLGNPYKTLGETSLFSHLTK), 151-175 (LQILRVGNMDTFTKIQRKDFAGLTF), 176-199 (LEELEIDASDLQSYEPKSLKSIQN), 200-223 (VSHLILHMKQHILLLEIFVDVTSS), 224-250 (VECLELRDTDLDTFHFSELSTGETNSL), 251-278 (IKKFTFRNVKITDESLFQVMKLLNQISG), 279-308 (LLELEFDDCTLNGVGNFRASDNDRVIDPGK), 309-337 (VETLTIRRLHIPRFYLFYDLSTLYSLTER), 338-361 (VKRITVENSKVFLVPCLLSQHLKS), 362-388 (LEYLDLSENLMVEEYLKNSACEDAWPS), 389-414 (LQTLILRQNHLASLEKTGETLLTLKN), 415-437 (LTNIDISKNSFHSMPETCQWPEK), 438-457 (MKYLNLSSTRIHSVTGCIPK), 458-478 (TLEILDVSNNNLNLFSLNLPQ), 479-500 (LKELYISRNKLMTLPDASLLPM), and 501-524 (LLVLKISRNAITTFSKEQLDSFHT). Residue Asn114 is glycosylated (N-linked (GlcNAc...) asparagine). N-linked (GlcNAc...) asparagine glycosylation occurs at Asn199. The cysteines at positions 353 and 382 are disulfide-linked. N-linked (GlcNAc...) asparagine glycosylation occurs at Asn414. An intrachain disulfide couples Cys432 to Cys454. N-linked (GlcNAc...) asparagine glycosylation is present at Asn442. One can recognise an LRRCT domain in the interval 525–579 (LKTLEAGGNNFICSCEFLSFTQEQQALAKVLIDWPANYLCDSPSHVRGQQVQDVR). The helical transmembrane segment at 589-609 (ALVSGMCCALFLLILLTGVLC) threads the bilayer. Topologically, residues 610-784 (HRFHGLWYMK…WVNLRAAIKS (175 aa)) are cytoplasmic. Residues 639–782 (ICYDAFVSYS…GFWVNLRAAI (144 aa)) form the TIR domain. Residue Lys754 forms a Glycyl lysine isopeptide (Lys-Gly) (interchain with G-Cter in ubiquitin) linkage. An ATG16L1-binding motif motif is present at residues 761–778 (YLEWPMDEAQREGFWVNL).

It belongs to the Toll-like receptor family. Interacts with LY96, TLR1 and TLR6 (via extracellular domain). TLR2 seems to exist in heterodimers with either TLR1 or TLR6 before stimulation by the ligand. The heterodimers form bigger oligomers in response to their corresponding ligands as well as further heterotypic associations with other receptors such as CD14 and/or CD36. Binds MYD88 (via TIR domain). Interacts with TICAM1. Interacts with CNPY3. Interacts with ATG16L1. Interacts with PPP1R11. Interacts with TICAM2. Interacts with TIRAP. As to quaternary structure, (Microbial infection) Interacts with M.tuberculosis EsxA. In terms of assembly, (Microbial infection) Interacts with M.bovis MPB83. (Microbial infection) Interacts with Staphylococcus aureus protein SSL5. Post-translationally, glycosylation of Asn-442 is critical for secretion of the N-terminal ectodomain of TLR2. Ubiquitinated at Lys-754 by PPP1R11, leading to its degradation. Deubiquitinated by USP2. Highly expressed in peripheral blood leukocytes, in particular in monocytes, in bone marrow, lymph node and in spleen. Also detected in lung and in fetal liver. Levels are low in other tissues.

Its subcellular location is the membrane. It is found in the cytoplasmic vesicle. The protein localises to the phagosome membrane. The protein resides in the membrane raft. Its function is as follows. Cooperates with LY96 to mediate the innate immune response to bacterial lipoproteins and other microbial cell wall components. Cooperates with TLR1 or TLR6 to mediate the innate immune response to bacterial lipoproteins or lipopeptides. Acts via MYD88 and TRAF6, leading to NF-kappa-B activation, cytokine secretion and the inflammatory response. May also activate immune cells and promote apoptosis in response to the lipid moiety of lipoproteins. Recognizes mycoplasmal macrophage-activating lipopeptide-2kD (MALP-2), soluble tuberculosis factor (STF), phenol-soluble modulin (PSM) and B.burgdorferi outer surface protein A lipoprotein (OspA-L) cooperatively with TLR6. Stimulation of monocytes in vitro with M.tuberculosis PstS1 induces p38 MAPK and ERK1/2 activation primarily via this receptor, but also partially via TLR4. MAPK activation in response to bacterial peptidoglycan also occurs via this receptor. Acts as a receptor for M.tuberculosis lipoproteins LprA, LprG, LpqH and PstS1, some lipoproteins are dependent on other coreceptors (TLR1, CD14 and/or CD36); the lipoproteins act as agonists to modulate antigen presenting cell functions in response to the pathogen. M.tuberculosis HSP70 (dnaK) but not HSP65 (groEL-2) acts via this protein to stimulate NF-kappa-B expression. Recognizes M.tuberculosis major T-antigen EsxA (ESAT-6) which inhibits downstream MYD88-dependent signaling (shown in mouse). Forms activation clusters composed of several receptors depending on the ligand, these clusters trigger signaling from the cell surface and subsequently are targeted to the Golgi in a lipid-raft dependent pathway. Forms the cluster TLR2:TLR6:CD14:CD36 in response to diacylated lipopeptides and TLR2:TLR1:CD14 in response to triacylated lipopeptides. Required for normal uptake of M.tuberculosis, a process that is inhibited by M.tuberculosis LppM. This Homo sapiens (Human) protein is Toll-like receptor 2.